Consider the following 448-residue polypeptide: Phosphoglucosamine mutase (448 aa).

The Phosphoserine intermediate role is filled by S89. Mg(2+) is bound by residues S89, D232, D234, and D236. S89 is modified (phosphoserine).

This sequence belongs to the phosphohexose mutase family. In terms of assembly, forms large aggregates. It depends on Mg(2+) as a cofactor. Activated by phosphorylation.

It catalyses the reaction alpha-D-glucosamine 1-phosphate = D-glucosamine 6-phosphate. Catalyzes the conversion of glucosamine-6-phosphate to glucosamine-1-phosphate. In Methanocaldococcus jannaschii (strain ATCC 43067 / DSM 2661 / JAL-1 / JCM 10045 / NBRC 100440) (Methanococcus jannaschii), this protein is Phosphoglucosamine mutase (glmM).